The sequence spans 107 residues: Insulin (107 aa).

An N-terminal signal peptide occupies residues 1 to 24 (MALWIRSLPLLALLVFSGPGTSYA). Intrachain disulfides connect C31–C93, C43–C106, and C92–C97. The propeptide at 57 to 84 (DVEQPLVSSPLRGEAGVLPFQQEEYEKV) is c peptide.

The protein belongs to the insulin family. As to quaternary structure, heterodimer of a B chain and an A chain linked by two disulfide bonds.

It localises to the secreted. In terms of biological role, insulin decreases blood glucose concentration. It increases cell permeability to monosaccharides, amino acids and fatty acids. It accelerates glycolysis, the pentose phosphate cycle, and glycogen synthesis in liver. The polypeptide is Insulin (INS) (Gallus gallus (Chicken)).